The following is a 92-amino-acid chain: Acylphosphatase (92 aa).

Cysteine 5 and cysteine 49 form a disulfide bridge. Positions 5–92 (CIIAWIYGRV…SGELTDFRIR (88 aa)) constitute an Acylphosphatase-like domain. Catalysis depends on residues arginine 20 and asparagine 38.

This sequence belongs to the acylphosphatase family.

The enzyme catalyses an acyl phosphate + H2O = a carboxylate + phosphate + H(+). The protein is Acylphosphatase of Shigella boydii serotype 4 (strain Sb227).